Here is a 384-residue protein sequence, read N- to C-terminus: Alanine racemase (384 aa).

The Proton acceptor; specific for D-alanine role is filled by K39. K39 carries the post-translational modification N6-(pyridoxal phosphate)lysine. A substrate-binding site is contributed by R138. The active-site Proton acceptor; specific for L-alanine is Y265. M312 contacts substrate.

It belongs to the alanine racemase family. It depends on pyridoxal 5'-phosphate as a cofactor.

The catalysed reaction is L-alanine = D-alanine. It functions in the pathway amino-acid biosynthesis; D-alanine biosynthesis; D-alanine from L-alanine: step 1/1. In terms of biological role, catalyzes the interconversion of L-alanine and D-alanine. May also act on other amino acids. The chain is Alanine racemase (alr) from Staphylococcus carnosus (strain TM300).